We begin with the raw amino-acid sequence, 89 residues long: Small ribosomal subunit protein uS15 (89 aa).

Belongs to the universal ribosomal protein uS15 family. In terms of assembly, part of the 30S ribosomal subunit. Forms a bridge to the 50S subunit in the 70S ribosome, contacting the 23S rRNA.

Its function is as follows. One of the primary rRNA binding proteins, it binds directly to 16S rRNA where it helps nucleate assembly of the platform of the 30S subunit by binding and bridging several RNA helices of the 16S rRNA. Functionally, forms an intersubunit bridge (bridge B4) with the 23S rRNA of the 50S subunit in the ribosome. The protein is Small ribosomal subunit protein uS15 of Nitrosococcus oceani (strain ATCC 19707 / BCRC 17464 / JCM 30415 / NCIMB 11848 / C-107).